The sequence spans 237 residues: D-aminoacyl-tRNA deacylase (237 aa).

It belongs to the DtdA deacylase family. In terms of assembly, monomer. Zn(2+) is required as a cofactor.

It catalyses the reaction a D-aminoacyl-tRNA + H2O = a tRNA + a D-alpha-amino acid + H(+). The catalysed reaction is glycyl-tRNA(Ala) + H2O = tRNA(Ala) + glycine + H(+). In terms of biological role, D-aminoacyl-tRNA deacylase with broad substrate specificity. By recycling D-aminoacyl-tRNA to D-amino acids and free tRNA molecules, this enzyme counteracts the toxicity associated with the formation of D-aminoacyl-tRNA entities in vivo. In Saccharolobus islandicus (strain Y.N.15.51 / Yellowstone #2) (Sulfolobus islandicus), this protein is D-aminoacyl-tRNA deacylase.